A 463-amino-acid chain; its full sequence is Glutathione amide reductase (463 aa).

Residues Thr2, Gln3, and His4 each coordinate Ni(2+). Residues 14–15 (SG), Glu34, and Thr41 contribute to the FAD site. Cys42 and Cys47 form a disulfide bridge. Residues Lys50 and 113–114 (HA) each bind FAD. Lys50 is a binding site for NAD(+). NAD(+) contacts are provided by residues 174-180 (AGYIGIE), 197-198 (LE), Val230, and Gly261. FAD-binding positions include Asp302 and 308 to 310 (QLT). Positions 308 and 341 each coordinate NAD(+). FAD is bound at residue His437. The Proton acceptor role is filled by His437.

The protein belongs to the class-I pyridine nucleotide-disulfide oxidoreductase family. In terms of assembly, homodimer. The cofactor is FAD.

The catalysed reaction is 2 glutathione amide + NAD(+) = glutathione amide disulfide + NADH + H(+). Its function is as follows. Catalyzes the reduction of glutathione amide disulfide (GASSAG) to restore glutathione amide (GASH) in the presence of NADH. May play a role in GASH metabolism under anaerobic conditions as a sulfide carrier necessary for cytoplasmic sulfide oxidation. This is Glutathione amide reductase from Marichromatium gracile (Chromatium gracile).